The chain runs to 351 residues: Protein RecA (351 aa).

Position 64-71 (64-71) interacts with ATP; it reads GPESSGKT. A disordered region spans residues 330 to 351; it reads DRFLQNGGPDPDDGDGDATAEM. Over residues 339–351 the composition is skewed to acidic residues; that stretch reads DPDDGDGDATAEM.

This sequence belongs to the RecA family.

The protein localises to the cytoplasm. In terms of biological role, can catalyze the hydrolysis of ATP in the presence of single-stranded DNA, the ATP-dependent uptake of single-stranded DNA by duplex DNA, and the ATP-dependent hybridization of homologous single-stranded DNAs. It interacts with LexA causing its activation and leading to its autocatalytic cleavage. The polypeptide is Protein RecA (Rhizobium leguminosarum bv. viciae).